A 467-amino-acid polypeptide reads, in one-letter code: Cytochrome P450 85A3 (467 aa).

A helical membrane pass occupies residues 2–22 (AIFLIIFVVFFGFCILSTPLF). Position 417 (cysteine 417) interacts with heme.

Belongs to the cytochrome P450 family. Heme serves as cofactor. As to expression, expressed in fruits.

It localises to the membrane. It catalyses the reaction 6-deoxocastasterone + reduced [NADPH--hemoprotein reductase] + O2 = 6alpha-hydroxycastasterone + oxidized [NADPH--hemoprotein reductase] + H2O + H(+). It carries out the reaction 6alpha-hydroxycastasterone + reduced [NADPH--hemoprotein reductase] + O2 = castasterone + oxidized [NADPH--hemoprotein reductase] + 2 H2O + H(+). The catalysed reaction is castasterone + reduced [NADPH--hemoprotein reductase] + O2 = brassinolide + oxidized [NADPH--hemoprotein reductase] + H2O + H(+). The enzyme catalyses 6-deoxocastasterone + 2 reduced [NADPH--hemoprotein reductase] + 2 O2 = castasterone + 2 oxidized [NADPH--hemoprotein reductase] + 3 H2O + 2 H(+). It functions in the pathway plant hormone biosynthesis; brassinosteroid biosynthesis. In terms of biological role, catalyzes the C6-oxidation step in brassinosteroids biosynthesis. Converts 6-deoxocastasterone (6-deoxoCS) to castasterone (CS), and castasterone (CS) to brassinolide (BL). The protein is Cytochrome P450 85A3 of Solanum lycopersicum (Tomato).